The primary structure comprises 249 residues: Glutathione S-transferase tcpG (249 aa).

A GST N-terminal domain is found at 20-109 (LYVRKAIPAP…YLCDKHDKDG (90 aa)). A GST C-terminal domain is found at 115-249 (NATERAQVTS…TEEEIELHGR (135 aa)).

This sequence belongs to the GST superfamily.

It carries out the reaction RX + glutathione = an S-substituted glutathione + a halide anion + H(+). It functions in the pathway secondary metabolite biosynthesis. Glutathione S-transferase; part of the gene cluster that mediates the biosynthesis of an unusual class of epipolythiodioxopiperazines (ETPs) lacking the reactive thiol group important for toxicity. Firstly, L-tyrosine is prenylated by tcpD, before undergoing condensation with L-glycine in a reaction catalyzed by the NRPS tcpP leading to the diketopiperazine (DKP) backbone. Afterwards the alpha-carbon of tyrosine is oxidized by the cytochrome P450 tcpC to form a hydroxyl group. However, in contrast other ETP biosynthesis pathways studied so far, tcpC is not able to bishydroxylate the DKP at both alpha-carbon positions, but hydroxylates the alpha-carbon of the tyrosine part and the nitrogen of the glycine part. The next steps involve an alpha,beta-elimination reaction catalyzed by tcpI, a methylation by the methyltransferase tcpN the action of the four enzyme cascade tcpG/K/J/I. Due to a dysfunctional cytochrome P450 monooxygenase tcpC, the pathway leads to the biosynthesis of probable non-toxic metabolites lacking the reactive thiol group. This is Glutathione S-transferase tcpG from Claviceps purpurea (strain 20.1) (Ergot fungus).